The primary structure comprises 244 residues: 3-deoxy-manno-octulosonate cytidylyltransferase (244 aa).

Belongs to the KdsB family.

It is found in the cytoplasm. It carries out the reaction 3-deoxy-alpha-D-manno-oct-2-ulosonate + CTP = CMP-3-deoxy-beta-D-manno-octulosonate + diphosphate. It functions in the pathway nucleotide-sugar biosynthesis; CMP-3-deoxy-D-manno-octulosonate biosynthesis; CMP-3-deoxy-D-manno-octulosonate from 3-deoxy-D-manno-octulosonate and CTP: step 1/1. Its pathway is bacterial outer membrane biogenesis; lipopolysaccharide biosynthesis. Its function is as follows. Activates KDO (a required 8-carbon sugar) for incorporation into bacterial lipopolysaccharide in Gram-negative bacteria. This is 3-deoxy-manno-octulosonate cytidylyltransferase from Synechococcus elongatus (strain ATCC 33912 / PCC 7942 / FACHB-805) (Anacystis nidulans R2).